We begin with the raw amino-acid sequence, 145 residues long: D-aminoacyl-tRNA deacylase (145 aa).

The Gly-cisPro motif, important for rejection of L-amino acids signature appears at 137-138 (GP).

This sequence belongs to the DTD family. Homodimer.

Its subcellular location is the cytoplasm. It catalyses the reaction glycyl-tRNA(Ala) + H2O = tRNA(Ala) + glycine + H(+). It carries out the reaction a D-aminoacyl-tRNA + H2O = a tRNA + a D-alpha-amino acid + H(+). Functionally, an aminoacyl-tRNA editing enzyme that deacylates mischarged D-aminoacyl-tRNAs. Also deacylates mischarged glycyl-tRNA(Ala), protecting cells against glycine mischarging by AlaRS. Acts via tRNA-based rather than protein-based catalysis; rejects L-amino acids rather than detecting D-amino acids in the active site. By recycling D-aminoacyl-tRNA to D-amino acids and free tRNA molecules, this enzyme counteracts the toxicity associated with the formation of D-aminoacyl-tRNA entities in vivo and helps enforce protein L-homochirality. This chain is D-aminoacyl-tRNA deacylase, found in Lactobacillus gasseri (strain ATCC 33323 / DSM 20243 / BCRC 14619 / CIP 102991 / JCM 1131 / KCTC 3163 / NCIMB 11718 / NCTC 13722 / AM63).